The sequence spans 150 residues: UPF0178 protein Shew_2726 (150 aa).

Belongs to the UPF0178 family.

The sequence is that of UPF0178 protein Shew_2726 from Shewanella loihica (strain ATCC BAA-1088 / PV-4).